The chain runs to 216 residues: ATP synthase subunit C lysine N-methyltransferase (216 aa).

M1 carries the N-acetylmethionine modification. Over residues 1-12 (MERGETPEEERQ) the composition is skewed to basic and acidic residues. Residues 1-25 (MERGETPEEERQSGCVLPTSPESDS) form a disordered region. The chain crosses the membrane as a helical span at residues 31 to 50 (WGFLITGVIGGALVTVYAVT). The tract at residues 51–85 (TPFIAPALRKVCLPFVPATSRQVENVVKMLQHRRG) is required for mitochondrial location.

The protein belongs to the ANT/ATPSC lysine N-methyltransferase family.

It is found in the mitochondrion membrane. The catalysed reaction is L-lysyl-[protein] + 3 S-adenosyl-L-methionine = N(6),N(6),N(6)-trimethyl-L-lysyl-[protein] + 3 S-adenosyl-L-homocysteine + 3 H(+). Functionally, mitochondrial protein-lysine N-methyltransferase that trimethylates ATP synthase subunit C, ATP5MC1 and ATP5MC2. Trimethylation is required for proper incorporation of the C subunit into the ATP synthase complex and mitochondrial respiration. Promotes chronic pain. Involved in persistent inflammatory and neuropathic pain: methyltransferase activity in the mitochondria of sensory neurons promotes chronic pain via a pathway that depends on the production of reactive oxygen species (ROS) and on the engagement of spinal cord microglia. This is ATP synthase subunit C lysine N-methyltransferase (Atpsckmt) from Rattus norvegicus (Rat).